The following is a 107-amino-acid chain: SH3 domain-binding glutamic acid-rich-like protein 2 (107 aa).

The SH3-binding signature appears at 61–67; sequence QGNPLPP.

This sequence belongs to the SH3BGR family.

The protein resides in the nucleus. In Mus musculus (Mouse), this protein is SH3 domain-binding glutamic acid-rich-like protein 2 (Sh3bgrl2).